A 417-amino-acid chain; its full sequence is CinA-like protein (417 aa).

This sequence belongs to the CinA family.

The sequence is that of CinA-like protein from Synechococcus sp. (strain RCC307).